Consider the following 244-residue polypeptide: MSGHSKWSTIKRKKGALDAKRNKIFTKLIREISIAAKMGGGDIESNSRLRLAVNKARVSNMPKDNIEKAIKKGSGDDNIGSEYFELTYEAYAPHGVALIIKCLTDNKNRTASEVRSVLSKSGGSLGAPGSVSYMFHKKGLISYSLDKYPEDEIIELALEAGAEDIYSEGSQIEVITSAENFEAISSFLRTKFEEDIAEIALIPGNKLSLNKEQMDKVLALIEKLEDFDDVQEVVHNLEIIDEIN.

It belongs to the TACO1 family.

The protein resides in the cytoplasm. This is Probable transcriptional regulatory protein BT0025 from Borrelia turicatae (strain 91E135).